The chain runs to 142 residues: MANSIYSTTMISNGGRDGRVFSPDNTFVQNLATPKEMGGQGGNDTNPEQLFAAGYSACFNSALSLILSQNKISDANPEVEITIELLKDDTDNGFKLGADIKVTLENMSQQDAEKFVEQAHQFCPYSKATRGNIDVQLDVTAQ.

The protein belongs to the OsmC/Ohr family.

This chain is Organic hydroperoxide resistance protein-like 2, found in Staphylococcus epidermidis (strain ATCC 12228 / FDA PCI 1200).